Reading from the N-terminus, the 1179-residue chain is ATP-dependent helicase/deoxyribonuclease subunit B (1179 aa).

Belongs to the helicase family. AddB/RexB type 2 subfamily. In terms of assembly, heterodimer of AddA and RexB. Mg(2+) is required as a cofactor.

Functionally, the heterodimer acts as both an ATP-dependent DNA helicase and an ATP-dependent, dual-direction single-stranded exonuclease. Recognizes the chi site generating a DNA molecule suitable for the initiation of homologous recombination. This subunit has 5' -&gt; 3' nuclease activity but not helicase activity. This Lacticaseibacillus casei (strain BL23) (Lactobacillus casei) protein is ATP-dependent helicase/deoxyribonuclease subunit B.